A 148-amino-acid chain; its full sequence is SsrA-binding protein (148 aa).

The protein belongs to the SmpB family.

The protein localises to the cytoplasm. In terms of biological role, required for rescue of stalled ribosomes mediated by trans-translation. Binds to transfer-messenger RNA (tmRNA), required for stable association of tmRNA with ribosomes. tmRNA and SmpB together mimic tRNA shape, replacing the anticodon stem-loop with SmpB. tmRNA is encoded by the ssrA gene; the 2 termini fold to resemble tRNA(Ala) and it encodes a 'tag peptide', a short internal open reading frame. During trans-translation Ala-aminoacylated tmRNA acts like a tRNA, entering the A-site of stalled ribosomes, displacing the stalled mRNA. The ribosome then switches to translate the ORF on the tmRNA; the nascent peptide is terminated with the 'tag peptide' encoded by the tmRNA and targeted for degradation. The ribosome is freed to recommence translation, which seems to be the essential function of trans-translation. In Pseudothermotoga lettingae (strain ATCC BAA-301 / DSM 14385 / NBRC 107922 / TMO) (Thermotoga lettingae), this protein is SsrA-binding protein.